Consider the following 121-residue polypeptide: Small ribosomal subunit protein uS13 (121 aa).

Positions Val-97–Lys-121 are disordered. The segment covering Gln-100–Lys-121 has biased composition (basic residues).

It belongs to the universal ribosomal protein uS13 family. As to quaternary structure, part of the 30S ribosomal subunit. Forms a loose heterodimer with protein S19. Forms two bridges to the 50S subunit in the 70S ribosome.

Located at the top of the head of the 30S subunit, it contacts several helices of the 16S rRNA. In the 70S ribosome it contacts the 23S rRNA (bridge B1a) and protein L5 of the 50S subunit (bridge B1b), connecting the 2 subunits; these bridges are implicated in subunit movement. Contacts the tRNAs in the A and P-sites. This Parasynechococcus marenigrum (strain WH8102) protein is Small ribosomal subunit protein uS13.